A 397-amino-acid chain; its full sequence is Glutamyl-tRNA reductase (397 aa).

Substrate contacts are provided by residues 47–50 (TCGR), Ser98, 103–105 (ETD), and Gln109. Residue Cys48 is the Nucleophile of the active site. 177 to 182 (GAGAVG) is an NADP(+) binding site.

The protein belongs to the glutamyl-tRNA reductase family. As to quaternary structure, homodimer.

The enzyme catalyses (S)-4-amino-5-oxopentanoate + tRNA(Glu) + NADP(+) = L-glutamyl-tRNA(Glu) + NADPH + H(+). It functions in the pathway porphyrin-containing compound metabolism; protoporphyrin-IX biosynthesis; 5-aminolevulinate from L-glutamyl-tRNA(Glu): step 1/2. Catalyzes the NADPH-dependent reduction of glutamyl-tRNA(Glu) to glutamate 1-semialdehyde (GSA). The sequence is that of Glutamyl-tRNA reductase from Pyrobaculum aerophilum (strain ATCC 51768 / DSM 7523 / JCM 9630 / CIP 104966 / NBRC 100827 / IM2).